A 111-amino-acid chain; its full sequence is UPF0122 protein CKR_1296 (111 aa).

Belongs to the UPF0122 family.

Its function is as follows. Might take part in the signal recognition particle (SRP) pathway. This is inferred from the conservation of its genetic proximity to ftsY/ffh. May be a regulatory protein. This chain is UPF0122 protein CKR_1296, found in Clostridium kluyveri (strain NBRC 12016).